Consider the following 487-residue polypeptide: Glutamyl-tRNA(Gln) amidotransferase subunit A (487 aa).

Catalysis depends on charge relay system residues Lys74 and Ser149. Ser173 (acyl-ester intermediate) is an active-site residue.

The protein belongs to the amidase family. GatA subfamily. In terms of assembly, heterotrimer of A, B and C subunits.

It catalyses the reaction L-glutamyl-tRNA(Gln) + L-glutamine + ATP + H2O = L-glutaminyl-tRNA(Gln) + L-glutamate + ADP + phosphate + H(+). Its function is as follows. Allows the formation of correctly charged Gln-tRNA(Gln) through the transamidation of misacylated Glu-tRNA(Gln) in organisms which lack glutaminyl-tRNA synthetase. The reaction takes place in the presence of glutamine and ATP through an activated gamma-phospho-Glu-tRNA(Gln). This Synechococcus sp. (strain CC9311) protein is Glutamyl-tRNA(Gln) amidotransferase subunit A.